Here is a 229-residue protein sequence, read N- to C-terminus: Urease accessory protein UreF (229 aa).

It belongs to the UreF family. As to quaternary structure, ureD, UreF and UreG form a complex that acts as a GTP-hydrolysis-dependent molecular chaperone, activating the urease apoprotein by helping to assemble the nickel containing metallocenter of UreC. The UreE protein probably delivers the nickel.

Its subcellular location is the cytoplasm. In terms of biological role, required for maturation of urease via the functional incorporation of the urease nickel metallocenter. This Trichormus variabilis (strain ATCC 29413 / PCC 7937) (Anabaena variabilis) protein is Urease accessory protein UreF.